Reading from the N-terminus, the 300-residue chain is Transcription initiation factor IIB (300 aa).

The TFIIB-type zinc finger occupies 2-34 (NKQKVCPACESAELIYDPERGEIVCAKCGYVIE). Positions 7, 10, 26, and 29 each coordinate Zn(2+). Repeat copies occupy residues 114-197 (SELD…ARNL) and 210-291 (DYVN…ELVE).

This sequence belongs to the TFIIB family.

Functionally, stabilizes TBP binding to an archaeal box-A promoter. Also responsible for recruiting RNA polymerase II to the pre-initiation complex (DNA-TBP-TFIIB). The chain is Transcription initiation factor IIB from Pyrococcus furiosus (strain ATCC 43587 / DSM 3638 / JCM 8422 / Vc1).